Reading from the N-terminus, the 616-residue chain is Chaperone protein HscA homolog (616 aa).

This sequence belongs to the heat shock protein 70 family.

In terms of biological role, chaperone involved in the maturation of iron-sulfur cluster-containing proteins. Has a low intrinsic ATPase activity which is markedly stimulated by HscB. This chain is Chaperone protein HscA homolog, found in Aliivibrio fischeri (strain ATCC 700601 / ES114) (Vibrio fischeri).